The primary structure comprises 296 residues: Acetylglutamate kinase (296 aa).

Residues 65–66 (GG), R87, and N190 contribute to the substrate site.

It belongs to the acetylglutamate kinase family. ArgB subfamily.

It is found in the cytoplasm. The enzyme catalyses N-acetyl-L-glutamate + ATP = N-acetyl-L-glutamyl 5-phosphate + ADP. Its pathway is amino-acid biosynthesis; L-arginine biosynthesis; N(2)-acetyl-L-ornithine from L-glutamate: step 2/4. Its function is as follows. Catalyzes the ATP-dependent phosphorylation of N-acetyl-L-glutamate. This is Acetylglutamate kinase from Moorella thermoacetica (strain ATCC 39073 / JCM 9320).